Reading from the N-terminus, the 79-residue chain is Exodeoxyribonuclease 7 small subunit (79 aa).

The protein belongs to the XseB family. Heterooligomer composed of large and small subunits.

It localises to the cytoplasm. The enzyme catalyses Exonucleolytic cleavage in either 5'- to 3'- or 3'- to 5'-direction to yield nucleoside 5'-phosphates.. In terms of biological role, bidirectionally degrades single-stranded DNA into large acid-insoluble oligonucleotides, which are then degraded further into small acid-soluble oligonucleotides. This chain is Exodeoxyribonuclease 7 small subunit, found in Syntrophus aciditrophicus (strain SB).